The primary structure comprises 129 residues: Large ribosomal subunit protein uL22 (129 aa).

The protein belongs to the universal ribosomal protein uL22 family. Part of the 50S ribosomal subunit.

In terms of biological role, this protein binds specifically to 23S rRNA; its binding is stimulated by other ribosomal proteins, e.g. L4, L17, and L20. It is important during the early stages of 50S assembly. It makes multiple contacts with different domains of the 23S rRNA in the assembled 50S subunit and ribosome. The globular domain of the protein is located near the polypeptide exit tunnel on the outside of the subunit, while an extended beta-hairpin is found that lines the wall of the exit tunnel in the center of the 70S ribosome. This is Large ribosomal subunit protein uL22 from Metamycoplasma hominis (strain ATCC 23114 / DSM 25592 / NBRC 14850 / NCTC 10111 / PG21) (Mycoplasma hominis).